The sequence spans 113 residues: HIG1 domain-containing protein C25B8.07c, mitochondrial (113 aa).

A disordered region spans residues 1–27 (MSSKLPKKSEENLELPTFPASEESLSR). The HIG1 domain occupies 12–103 (NLELPTFPAS…PPRREAPSNS (92 aa)). The next 2 membrane-spanning stretches (helical) occupy residues 39-59 (PFIP…GYYI) and 75-95 (VMSQ…IGPP).

It is found in the mitochondrion membrane. In Schizosaccharomyces pombe (strain 972 / ATCC 24843) (Fission yeast), this protein is HIG1 domain-containing protein C25B8.07c, mitochondrial.